Reading from the N-terminus, the 565-residue chain is FAD-linked oxidoreductase ZEB1 (565 aa).

Residues 1-27 (MKLSPSKYLPVLLGTLSLTIANPSADC) form the signal peptide. N-linked (GlcNAc...) asparagine glycosylation is found at N46, N82, and N100. An FAD-binding PCMH-type domain is found at 115 to 293 (LGNYVSYAIA…ISMTVKAHPG (179 aa)). Residues N340, N352, and N421 are each glycosylated (N-linked (GlcNAc...) asparagine).

This sequence belongs to the oxygen-dependent FAD-linked oxidoreductase family.

It participates in mycotoxin biosynthesis. Functionally, FAD-linked oxidoreductase; part of the gene cluster that mediates the biosynthesis of zearalenone (ZEA), a nonsteroid estrogen that is a contaminant of cereal grains and causes estrogenic disorders in humans and animals. The ZEA backbone is synthesized from a single acetyl-CoA molecule and eight malonyl-CoA molecules. The reducing polyketide synthase ZEA2 is proposed to synthesize a reduced hexaketide intermediate by using different combinations of its reductive domains during each round of condensation. The hexaketide thioester is then transacylated to the non-reducing polyketide synthase ZEA1 and is further condensed with three malonyl-CoAs without reductive tailoring to yield a mixed reduced/unreduced nonaketide. ZEA1 must be able to interact with ZEA2 to facilitate starter-unit acyltransfer and initiate polyketide biosynthesis. ZEA1 also mediates the required C2-C7 cyclization to form the resorcylate core and catalyzes the formation of the macrolactone. ZEB1 is then responsible for the chemical conversion of beta-zearalenonol (beta-ZOL) to ZEA in the biosynthetic pathway. The polypeptide is FAD-linked oxidoreductase ZEB1 (Gibberella zeae (strain ATCC MYA-4620 / CBS 123657 / FGSC 9075 / NRRL 31084 / PH-1) (Wheat head blight fungus)).